A 653-amino-acid chain; its full sequence is ATP-dependent zinc metalloprotease FtsH 1 (653 aa).

Positions methionine 1 to lysine 20 are disordered. Topologically, residues methionine 1–asparagine 30 are cytoplasmic. A helical transmembrane segment spans residues isoleucine 31–tryptophan 51. Topologically, residues glutamate 52–tryptophan 126 are periplasmic. Residues tryptophan 127–leucine 147 form a helical membrane-spanning segment. The Cytoplasmic portion of the chain corresponds to tyrosine 148–valine 653. Residue glycine 219–threonine 226 coordinates ATP. Histidine 441 contributes to the Zn(2+) binding site. Residue glutamate 442 is part of the active site. Zn(2+) is bound by residues histidine 445 and aspartate 518.

This sequence in the central section; belongs to the AAA ATPase family. It in the C-terminal section; belongs to the peptidase M41 family. Homohexamer. Zn(2+) serves as cofactor.

It is found in the cell inner membrane. In terms of biological role, acts as a processive, ATP-dependent zinc metallopeptidase for both cytoplasmic and membrane proteins. Plays a role in the quality control of integral membrane proteins. The chain is ATP-dependent zinc metalloprotease FtsH 1 from Petrotoga mobilis (strain DSM 10674 / SJ95).